A 669-amino-acid chain; its full sequence is Sodium-dependent phosphate transporter (669 aa).

The Extracellular segment spans residues 1–6 (MVTGPD). Residues 7 to 27 (MLWLVITSGIACFFMAFVTGA) form a helical membrane-spanning segment. The Cytoplasmic portion of the chain corresponds to 28–47 (NDIANTFSTSIGSKAISIKK). Residues 48-68 (ALIVAFFFEALGASLLGGTVT) traverse the membrane as a helical segment. Residues 69–86 (DSIRSKIINFQVFYDTPE) lie on the Extracellular side of the membrane. The chain crosses the membrane as a helical span at residues 87-107 (FLMLGMCCALMGATVWLAVAT). R108 is a topological domain (cytoplasmic). The helical transmembrane segment at 109 to 129 (AGLPVSTTHSIIGALLGFGLA) threads the bilayer. Residues 130–143 (TGNMKSIKWEKINN) are Extracellular-facing. The helical transmembrane segment at 144-164 (IVISWLAAPILAGTCSAIAFT) threads the bilayer. The Cytoplasmic segment spans residues 165–186 (VLRMLILRKKNSFEIIKKMYWF). The helical transmembrane segment at 187–207 (LIFLITLPFSVFLIFHNPIVI) threads the bilayer. Residues 208-239 (NTQCKMKKDGKVIVSSPCYIEDWSAAHSFYAS) lie on the Extracellular side of the membrane. Residues 240-260 (IICILLSSLLTAIGSFVIYII) traverse the membrane as a helical segment. The Cytoplasmic segment spans residues 261 to 502 (YNKRINNYNL…YNNGIRGKIK (242 aa)). Positions 311–335 (AHNNTSNGTKQNQVGNGTKSNNNNV) are enriched in polar residues. Disordered regions lie at residues 311 to 364 (AHNN…SVEA) and 392 to 444 (TNMN…KNME). Over residues 342 to 352 (KNVKSQQDDSK) the composition is skewed to basic and acidic residues. Low complexity predominate over residues 395-433 (NENNNNSNKNNNSNKNNNSNKNNNSNKNNNSNNGNSNEG). Residues 503–523 (VQWYILLFGGLSMSLGLSIMG) form a helical membrane-spanning segment. Over 524-542 (YRVIKTVGMKLIKITPARG) the chain is Extracellular. The helical transmembrane segment at 543 to 563 (FTIELISGLVVLFFSICGIPL) threads the bilayer. At 564–632 (SSTHCAVSSV…TSCVNLRLFR (69 aa)) the chain is on the cytoplasmic side. Residues 633–653 (TVFLSWILTVVFSATVTAGIY) traverse the membrane as a helical segment. Over 654–669 (SFAAYSPSYIMKMQTV) the chain is Extracellular.

This sequence belongs to the inorganic phosphate transporter (PiT) (TC 2.A.20) family.

Its subcellular location is the cell membrane. It catalyses the reaction 2 Na(+)(out) + phosphate(out) = 2 Na(+)(in) + phosphate(in). Functionally, sodium-phosphate symporter which preferentially transports the monovalent form of phosphate with a stoichiometry of two sodium ions per phosphate ion. This is Sodium-dependent phosphate transporter from Plasmodium falciparum.